Consider the following 202-residue polypeptide: tRNA (guanine-N(7)-)-methyltransferase (202 aa).

S-adenosyl-L-methionine-binding residues include glutamate 34, glutamate 59, aspartate 86, and aspartate 107. Aspartate 107 is an active-site residue. Residues lysine 111, aspartate 143, and 181 to 184 (TDYE) each bind substrate.

This sequence belongs to the class I-like SAM-binding methyltransferase superfamily. TrmB family.

It carries out the reaction guanosine(46) in tRNA + S-adenosyl-L-methionine = N(7)-methylguanosine(46) in tRNA + S-adenosyl-L-homocysteine. Its pathway is tRNA modification; N(7)-methylguanine-tRNA biosynthesis. Functionally, catalyzes the formation of N(7)-methylguanine at position 46 (m7G46) in tRNA. The protein is tRNA (guanine-N(7)-)-methyltransferase of Metamycoplasma hominis (strain ATCC 23114 / DSM 25592 / NBRC 14850 / NCTC 10111 / PG21) (Mycoplasma hominis).